Reading from the N-terminus, the 402-residue chain is Phosphoglycerate kinase (402 aa).

Substrate contacts are provided by residues 24–26 (DFN), R40, 63–66 (HFGR), R122, and R155. Residues K206, G297, E328, and 357-360 (GGDS) each bind ATP.

It belongs to the phosphoglycerate kinase family. In terms of assembly, monomer.

It localises to the cytoplasm. The catalysed reaction is (2R)-3-phosphoglycerate + ATP = (2R)-3-phospho-glyceroyl phosphate + ADP. It functions in the pathway carbohydrate degradation; glycolysis; pyruvate from D-glyceraldehyde 3-phosphate: step 2/5. This is Phosphoglycerate kinase from Parasynechococcus marenigrum (strain WH8102).